A 363-amino-acid chain; its full sequence is Photosystem II protein D1 1 (363 aa).

Helical transmembrane passes span 32 to 49, 121 to 136, and 145 to 159; these read YVGW…VSAI, HFLI…QWEL, and WIAM…AATA. His121 is a binding site for chlorophyll a. Position 129 (Tyr129) interacts with pheophytin a. [CaMn4O5] cluster is bound by residues Glu173 and Glu192. The helical transmembrane segment at 200 to 221 threads the bilayer; the sequence is FHMLGVVGVFGGAFLSAMHGSL. Residue His201 coordinates chlorophyll a. Residues His218 and 268–269 each bind a quinone; that span reads AF. His218 contributes to the Fe cation binding site. Residue His276 coordinates Fe cation. A helical transmembrane segment spans residues 278–292; that stretch reads LLAVLPTIGIWFAAL. Residues His336 and Ala348 each contribute to the [CaMn4O5] cluster site. The propeptide occupies 349–363; sequence STESKEIPTIPIMTS.

It belongs to the reaction center PufL/M/PsbA/D family. As to quaternary structure, PSII is composed of 1 copy each of membrane proteins PsbA, PsbB, PsbC, PsbD, PsbE, PsbF, PsbH, PsbI, PsbJ, PsbK, PsbL, PsbM, PsbT, PsbX, PsbY, PsbZ, Psb30/Ycf12, peripheral proteins PsbO, CyanoQ (PsbQ), PsbU, PsbV and a large number of cofactors. It forms dimeric complexes. It depends on The D1/D2 heterodimer binds P680, chlorophylls that are the primary electron donor of PSII, and subsequent electron acceptors. It shares a non-heme iron and each subunit binds pheophytin, quinone, additional chlorophylls, carotenoids and lipids. D1 provides most of the ligands for the Mn4-Ca-O5 cluster of the oxygen-evolving complex (OEC). There is also a Cl(-1) ion associated with D1 and D2, which is required for oxygen evolution. The PSII complex binds additional chlorophylls, carotenoids and specific lipids. as a cofactor. Tyr-164 forms a radical intermediate that is referred to as redox-active TyrZ, YZ or Y-Z. In terms of processing, C-terminally processed by CtpA; processing is essential to allow assembly of the oxygen-evolving complex and thus photosynthetic growth.

Its subcellular location is the cellular thylakoid membrane. It carries out the reaction 2 a plastoquinone + 4 hnu + 2 H2O = 2 a plastoquinol + O2. Its function is as follows. Photosystem II (PSII) is a light-driven water:plastoquinone oxidoreductase that uses light energy to abstract electrons from H(2)O, generating O(2) and a proton gradient subsequently used for ATP formation. It consists of a core antenna complex that captures photons, and an electron transfer chain that converts photonic excitation into a charge separation. The D1/D2 (PsbA/PsbD) reaction center heterodimer binds P680, the primary electron donor of PSII as well as several subsequent electron acceptors. The chain is Photosystem II protein D1 1 from Acaryochloris marina (strain MBIC 11017).